Here is a 200-residue protein sequence, read N- to C-terminus: Holliday junction branch migration complex subunit RuvA (200 aa).

The segment at 1-63 is domain I; that stretch reads MIASVRGEVL…EDSMTLYGFP (63 aa). A domain II region spans residues 64–142; sequence DSESKELFGL…AVASTSGAVP (79 aa). Residues 142–146 are flexible linker; the sequence is PLGAG. The interval 147–200 is domain III; that stretch reads GGGSVRDQIVEALVGLGFPAKQAEQAADSVLAEAPESTTSTALRSALSLLGKTR.

This sequence belongs to the RuvA family. As to quaternary structure, homotetramer. Forms an RuvA(8)-RuvB(12)-Holliday junction (HJ) complex. HJ DNA is sandwiched between 2 RuvA tetramers; dsDNA enters through RuvA and exits via RuvB. An RuvB hexamer assembles on each DNA strand where it exits the tetramer. Each RuvB hexamer is contacted by two RuvA subunits (via domain III) on 2 adjacent RuvB subunits; this complex drives branch migration. In the full resolvosome a probable DNA-RuvA(4)-RuvB(12)-RuvC(2) complex forms which resolves the HJ.

The protein localises to the cytoplasm. The RuvA-RuvB-RuvC complex processes Holliday junction (HJ) DNA during genetic recombination and DNA repair, while the RuvA-RuvB complex plays an important role in the rescue of blocked DNA replication forks via replication fork reversal (RFR). RuvA specifically binds to HJ cruciform DNA, conferring on it an open structure. The RuvB hexamer acts as an ATP-dependent pump, pulling dsDNA into and through the RuvAB complex. HJ branch migration allows RuvC to scan DNA until it finds its consensus sequence, where it cleaves and resolves the cruciform DNA. In Rhodococcus jostii (strain RHA1), this protein is Holliday junction branch migration complex subunit RuvA.